We begin with the raw amino-acid sequence, 293 residues long: Homoserine O-acetyltransferase (293 aa).

The Acyl-thioester intermediate role is filled by Cys-141. Lys-162 and Ser-190 together coordinate substrate. The active-site Proton acceptor is His-234. Glu-236 is an active-site residue. A substrate-binding site is contributed by Arg-248.

This sequence belongs to the MetA family.

The protein resides in the cytoplasm. The enzyme catalyses L-homoserine + acetyl-CoA = O-acetyl-L-homoserine + CoA. It participates in amino-acid biosynthesis; L-methionine biosynthesis via de novo pathway; O-acetyl-L-homoserine from L-homoserine: step 1/1. Its function is as follows. Transfers an acetyl group from acetyl-CoA to L-homoserine, forming acetyl-L-homoserine. This is Homoserine O-acetyltransferase from Campylobacter jejuni subsp. jejuni serotype O:2 (strain ATCC 700819 / NCTC 11168).